The following is a 443-amino-acid chain: 3-phosphoshikimate 1-carboxyvinyltransferase (443 aa).

Residues 1–25 (MSHSAEPLPMTARRSGPLTGEAQVP) form a disordered region. 3-phosphoshikimate is bound by residues lysine 28, serine 29, and arginine 33. Lysine 28 is a binding site for phosphoenolpyruvate. Residues glycine 101 and arginine 129 each contribute to the phosphoenolpyruvate site. 3-phosphoshikimate is bound by residues serine 174, glutamine 176, aspartate 326, and lysine 353. Phosphoenolpyruvate is bound at residue glutamine 176. Aspartate 326 functions as the Proton acceptor in the catalytic mechanism. Residues arginine 357 and arginine 400 each contribute to the phosphoenolpyruvate site.

Belongs to the EPSP synthase family. Monomer.

Its subcellular location is the cytoplasm. It carries out the reaction 3-phosphoshikimate + phosphoenolpyruvate = 5-O-(1-carboxyvinyl)-3-phosphoshikimate + phosphate. It functions in the pathway metabolic intermediate biosynthesis; chorismate biosynthesis; chorismate from D-erythrose 4-phosphate and phosphoenolpyruvate: step 6/7. Its function is as follows. Catalyzes the transfer of the enolpyruvyl moiety of phosphoenolpyruvate (PEP) to the 5-hydroxyl of shikimate-3-phosphate (S3P) to produce enolpyruvyl shikimate-3-phosphate and inorganic phosphate. The sequence is that of 3-phosphoshikimate 1-carboxyvinyltransferase from Paracoccus denitrificans (strain Pd 1222).